We begin with the raw amino-acid sequence, 334 residues long: ABC transporter L-arabinose-binding periplasmic protein (334 aa).

A signal peptide spans 1–30 (MNRTIRRHTLRALLAALCIAPLGMQGAARA).

Belongs to the bacterial solute-binding protein 2 family. The complex is composed of two ATP-binding proteins (AraG), two transmembrane proteins (AraH) and a solute-binding protein (AraF).

Its subcellular location is the periplasm. Functionally, part of the ABC transporter complex AraFGH involved in L-arabinose import. Binds with high affinity to L-arabinose. The polypeptide is ABC transporter L-arabinose-binding periplasmic protein (araF) (Azospirillum brasilense).